Reading from the N-terminus, the 736-residue chain is Phosphoribosylformylglycinamidine synthase subunit PurL (736 aa).

His50 is an active-site residue. Residues Tyr53 and Lys92 each contribute to the ATP site. A Mg(2+)-binding site is contributed by Glu94. Residues 95–98 (SHNH) and Arg117 contribute to the substrate site. His96 functions as the Proton acceptor in the catalytic mechanism. Asp118 contributes to the Mg(2+) binding site. Substrate is bound at residue Gln241. Asp269 is a Mg(2+) binding site. 313 to 315 (ESQ) contacts substrate. Asp495 and Gly532 together coordinate ATP. Asn533 contributes to the Mg(2+) binding site. Residue Ser535 coordinates substrate.

The protein belongs to the FGAMS family. Monomer. Part of the FGAM synthase complex composed of 1 PurL, 1 PurQ and 2 PurS subunits.

It localises to the cytoplasm. The catalysed reaction is N(2)-formyl-N(1)-(5-phospho-beta-D-ribosyl)glycinamide + L-glutamine + ATP + H2O = 2-formamido-N(1)-(5-O-phospho-beta-D-ribosyl)acetamidine + L-glutamate + ADP + phosphate + H(+). It functions in the pathway purine metabolism; IMP biosynthesis via de novo pathway; 5-amino-1-(5-phospho-D-ribosyl)imidazole from N(2)-formyl-N(1)-(5-phospho-D-ribosyl)glycinamide: step 1/2. Part of the phosphoribosylformylglycinamidine synthase complex involved in the purines biosynthetic pathway. Catalyzes the ATP-dependent conversion of formylglycinamide ribonucleotide (FGAR) and glutamine to yield formylglycinamidine ribonucleotide (FGAM) and glutamate. The FGAM synthase complex is composed of three subunits. PurQ produces an ammonia molecule by converting glutamine to glutamate. PurL transfers the ammonia molecule to FGAR to form FGAM in an ATP-dependent manner. PurS interacts with PurQ and PurL and is thought to assist in the transfer of the ammonia molecule from PurQ to PurL. The sequence is that of Phosphoribosylformylglycinamidine synthase subunit PurL from Bartonella tribocorum (strain CIP 105476 / IBS 506).